A 395-amino-acid polypeptide reads, in one-letter code: Elongation factor Tu (395 aa).

Positions 10–205 (KPHVNIGTIG…CDTWIPLPPR (196 aa)) constitute a tr-type G domain. Positions 19–26 (GHVDHGKT) are G1. Residue 19–26 (GHVDHGKT) participates in GTP binding. Residue threonine 26 coordinates Mg(2+). Positions 60–64 (GITIN) are G2. The G3 stretch occupies residues 81 to 84 (DCPG). GTP-binding positions include 81–85 (DCPGH) and 136–139 (NKCD). Residues 136–139 (NKCD) are G4. The interval 174 to 176 (SAL) is G5.

It belongs to the TRAFAC class translation factor GTPase superfamily. Classic translation factor GTPase family. EF-Tu/EF-1A subfamily. Monomer.

It is found in the cytoplasm. It carries out the reaction GTP + H2O = GDP + phosphate + H(+). GTP hydrolase that promotes the GTP-dependent binding of aminoacyl-tRNA to the A-site of ribosomes during protein biosynthesis. The sequence is that of Elongation factor Tu from Parabacteroides distasonis (strain ATCC 8503 / DSM 20701 / CIP 104284 / JCM 5825 / NCTC 11152).